The sequence spans 103 residues: N(4)-acetylcytidine amidohydrolase (103 aa).

The ASCH domain occupies 6–101; that stretch reads ITFFQRFQDD…QTQFYVIEFK (96 aa). Catalysis depends on Lys-21, which acts as the Proton acceptor. Thr-24 serves as the catalytic Nucleophile. Glu-74 (proton donor) is an active-site residue.

The protein belongs to the N(4)-acetylcytidine amidohydrolase family.

It carries out the reaction N(4)-acetylcytidine + H2O = cytidine + acetate + H(+). The enzyme catalyses N(4)-acetyl-2'-deoxycytidine + H2O = 2'-deoxycytidine + acetate + H(+). It catalyses the reaction N(4)-acetylcytosine + H2O = cytosine + acetate + H(+). In terms of biological role, catalyzes the hydrolysis of N(4)-acetylcytidine (ac4C). The chain is N(4)-acetylcytidine amidohydrolase (yqfB) from Escherichia coli (strain K12 / MC4100 / BW2952).